The sequence spans 258 residues: Mediator of RNA polymerase II transcription subunit 4 (258 aa).

Residues 52–101 adopt a coiled-coil conformation; the sequence is FRKMLELAEEQAKVEEAMDQLRAKVEVHDREIQKLQKSLKDAELILSTAI. Disordered regions lie at residues 164–208 and 234–258; these read GKSE…EVPN and LETRAQDDVEVMSTDSSSSSSSDSQ. Residues 166–190 are compositionally biased toward polar residues; that stretch reads SEQNINGGTVTHQNSGMPSEQQRTL. Residues 194 to 204 are compositionally biased toward gly residues; sequence AGSGSGSGAGG. Low complexity predominate over residues 246-258; that stretch reads STDSSSSSSSDSQ.

The protein belongs to the Mediator complex subunit 4 family. Component of the Mediator complex, which includes at least MED4, MED6, MED14, MED17, MED18, MED20, MED21, MED23, MED24, MED27, MED30 and MED31. Interacts with MED10 and MED21.

It localises to the nucleus. Component of the Mediator complex, a coactivator involved in the regulated transcription of nearly all RNA polymerase II-dependent genes. Mediator functions as a bridge to convey information from gene-specific regulatory proteins to the basal RNA polymerase II transcription machinery. Mediator is recruited to promoters by direct interactions with regulatory proteins and serves as a scaffold for the assembly of a functional preinitiation complex with RNA polymerase II and the general transcription factors. Required for activated transcription of the MtnA, MtnB and MtnD genes. The protein is Mediator of RNA polymerase II transcription subunit 4 (MED4) of Drosophila melanogaster (Fruit fly).